Reading from the N-terminus, the 425-residue chain is MTIASERICNSENNLKSCDNEVYLSIEKELQRQRSQLQLIASENFASKAVMEAQGSFLTNKYAEGYPGKRYYCGCEYVDEVENLAIERLCKLFNVKFANVQPHSGSQANQAVFASLLTPGDTILGLSLNCGGHLTHGAAPNLSGKWFKSIQYTVNRDTYLLDMDEVERLALEHKPKLIIAGASAYPRKIDFERFREIANKVGAYLLADIAHYSGLIAAGCYPSPAEYAHIITSTTHKTLRGPRGGVVMTNDEALHKKIQSAVFPGLQGGPLMHVIAAKAVAFKEALAPEFKTYSKKVVENAKVLAQALQGHGLNIITGGTDSHIVLVDLRSQKLKGKDVVNSLERAGITCNKNSVPFDTEKPTITSGLRFGTAAETTRGLEKKDFKEIADLINEIIQGLIDGNSPDVEKAVKNKVESICSNFPIY.

(6S)-5,6,7,8-tetrahydrofolate contacts are provided by residues Leu-128 and 132–134 (GHL). N6-(pyridoxal phosphate)lysine is present on Lys-237.

This sequence belongs to the SHMT family. Homodimer. Pyridoxal 5'-phosphate serves as cofactor.

It localises to the cytoplasm. The catalysed reaction is (6R)-5,10-methylene-5,6,7,8-tetrahydrofolate + glycine + H2O = (6S)-5,6,7,8-tetrahydrofolate + L-serine. The protein operates within one-carbon metabolism; tetrahydrofolate interconversion. It participates in amino-acid biosynthesis; glycine biosynthesis; glycine from L-serine: step 1/1. Its function is as follows. Catalyzes the reversible interconversion of serine and glycine with tetrahydrofolate (THF) serving as the one-carbon carrier. This reaction serves as the major source of one-carbon groups required for the biosynthesis of purines, thymidylate, methionine, and other important biomolecules. Also exhibits THF-independent aldolase activity toward beta-hydroxyamino acids, producing glycine and aldehydes, via a retro-aldol mechanism. The sequence is that of Serine hydroxymethyltransferase from Wolbachia pipientis subsp. Culex pipiens (strain wPip).